The chain runs to 374 residues: Alcohol dehydrogenase class-3 (374 aa).

Position 2 is an N-acetylserine (serine 2). 7 residues coordinate Zn(2+): cysteine 45, histidine 67, cysteine 97, cysteine 100, cysteine 103, cysteine 111, and cysteine 174. Lysine 233 bears the N6-succinyllysine mark. Serine 247 bears the Phosphoserine mark. An N6-succinyllysine modification is found at lysine 315. Phosphoserine is present on residues serine 324 and serine 351.

Belongs to the zinc-containing alcohol dehydrogenase family. Class-III subfamily. Homodimer. The cofactor is Zn(2+).

It is found in the cytoplasm. The catalysed reaction is a primary alcohol + NAD(+) = an aldehyde + NADH + H(+). It catalyses the reaction a secondary alcohol + NAD(+) = a ketone + NADH + H(+). It carries out the reaction S-(hydroxymethyl)glutathione + NADP(+) = S-formylglutathione + NADPH + H(+). The enzyme catalyses S-(hydroxymethyl)glutathione + NAD(+) = S-formylglutathione + NADH + H(+). The catalysed reaction is 20-oxo-(5Z,8Z,11Z,14Z)-eicosatetraenoate + NAD(+) + H2O = (5Z,8Z,11Z,14Z)-eicosatetraenedioate + NADH + 2 H(+). It catalyses the reaction 20-hydroxy-(5Z,8Z,11Z,14Z)-eicosatetraenoate + NAD(+) = 20-oxo-(5Z,8Z,11Z,14Z)-eicosatetraenoate + NADH + H(+). It carries out the reaction S-nitrosoglutathione + NADH + H(+) = S-(hydroxysulfenamide)glutathione + NAD(+). Functionally, catalyzes the oxidation of long-chain primary alcohols and the oxidation of S-(hydroxymethyl) glutathione. Also oxidizes long chain omega-hydroxy fatty acids, such as 20-HETE, producing both the intermediate aldehyde, 20-oxoarachidonate and the end product, a dicarboxylic acid, (5Z,8Z,11Z,14Z)-eicosatetraenedioate. Class-III ADH is remarkably ineffective in oxidizing ethanol. Required for clearance of cellular formaldehyde, a cytotoxic and carcinogenic metabolite that induces DNA damage. Also acts as a S-nitroso-glutathione reductase by catalyzing the NADH-dependent reduction of S-nitrosoglutathione, thereby regulating protein S-nitrosylation. The protein is Alcohol dehydrogenase class-3 of Equus caballus (Horse).